The following is a 138-amino-acid chain: Acidic phospholipase A2 MVL-PLA2 (138 aa).

The signal sequence occupies residues 1–16; it reads MRTLWIVAVCLMGVEG. 7 disulfides stabilise this stretch: Cys-42–Cys-131, Cys-44–Cys-60, Cys-59–Cys-111, Cys-65–Cys-138, Cys-66–Cys-104, Cys-73–Cys-97, and Cys-91–Cys-102. Ca(2+)-binding residues include Tyr-43, Gly-45, and Gly-47. His-63 is a catalytic residue. Asp-64 contributes to the Ca(2+) binding site. The May inhibit integrin function (Atypical cell attachment site) signature appears at 86–88; the sequence is NGD. Residue Asp-105 is part of the active site.

Belongs to the phospholipase A2 family. Group II subfamily. D49 sub-subfamily. Requires Ca(2+) as cofactor. Expressed by the venom gland.

It localises to the secreted. The catalysed reaction is a 1,2-diacyl-sn-glycero-3-phosphocholine + H2O = a 1-acyl-sn-glycero-3-phosphocholine + a fatty acid + H(+). Functionally, snake venom phospholipase A2 (PLA2) that displays an inhibitory effect, independent from its catalytic activity, on tumor cell adhesion and migration. This effect is mediated via specific inhibition of integrins alpha-5/beta-1 (ITGA5/ITGB1), alpha-v/beta-3 (ITGAV/ITGB3) and alpha-v/beta-6 (ITGAV/ITGB6). PLA2 catalyzes the calcium-dependent hydrolysis of the 2-acyl groups in 3-sn-phosphoglycerides. The protein is Acidic phospholipase A2 MVL-PLA2 of Macrovipera lebetina transmediterranea (Blunt-nosed viper).